A 695-amino-acid chain; its full sequence is DNA ligase (695 aa).

Residues 44-48, 93-94, and E123 contribute to the NAD(+) site; these read DAEYD and SL. K125 acts as the N6-AMP-lysine intermediate in catalysis. Positions 146, 184, 300, and 324 each coordinate NAD(+). Residues C418, C421, C436, and C442 each contribute to the Zn(2+) site. In terms of domain architecture, BRCT spans 605–694; sequence SAAKPLAGIT…PDAARSMAQR (90 aa).

This sequence belongs to the NAD-dependent DNA ligase family. LigA subfamily. It depends on Mg(2+) as a cofactor. Requires Mn(2+) as cofactor.

The catalysed reaction is NAD(+) + (deoxyribonucleotide)n-3'-hydroxyl + 5'-phospho-(deoxyribonucleotide)m = (deoxyribonucleotide)n+m + AMP + beta-nicotinamide D-nucleotide.. Its function is as follows. DNA ligase that catalyzes the formation of phosphodiester linkages between 5'-phosphoryl and 3'-hydroxyl groups in double-stranded DNA using NAD as a coenzyme and as the energy source for the reaction. It is essential for DNA replication and repair of damaged DNA. The sequence is that of DNA ligase from Acidothermus cellulolyticus (strain ATCC 43068 / DSM 8971 / 11B).